A 117-amino-acid polypeptide reads, in one-letter code: Large ribosomal subunit protein bL20 (117 aa).

It belongs to the bacterial ribosomal protein bL20 family.

Binds directly to 23S ribosomal RNA and is necessary for the in vitro assembly process of the 50S ribosomal subunit. It is not involved in the protein synthesizing functions of that subunit. The chain is Large ribosomal subunit protein bL20 from Wolinella succinogenes (strain ATCC 29543 / DSM 1740 / CCUG 13145 / JCM 31913 / LMG 7466 / NCTC 11488 / FDC 602W) (Vibrio succinogenes).